We begin with the raw amino-acid sequence, 317 residues long: Olfactory receptor 10A5 (317 aa).

Residues 1–26 lie on the Extracellular side of the membrane; sequence MAIGNWTEISEFILMSFSSLPTEIQS. N-linked (GlcNAc...) asparagine glycosylation is present at Asn-5. Residues 27-47 form a helical membrane-spanning segment; that stretch reads LLFLTFLTIYLVTLKGNSLII. Over 48-55 the chain is Cytoplasmic; that stretch reads LVTLADPM. Residues 56–76 traverse the membrane as a helical segment; sequence LHSPMYFFLRNLSFLEIGFNL. Residues 77-100 are Extracellular-facing; it reads VIVPKMLGTLLAQDTTISFLGCAT. Cys-98 and Cys-190 form a disulfide bridge. The chain crosses the membrane as a helical span at residues 101–121; sequence QMYFFFFFGVAECFLLATMAY. At 122–140 the chain is on the cytoplasmic side; it reads DRYVAICSPLHYPVIMNQR. A helical transmembrane segment spans residues 141-161; it reads TRAKLAAASWFPGFPVATVQT. The Extracellular segment spans residues 162 to 198; that stretch reads TWLFSFPFCGTNKVNHFFCDSPPVLKLVCADTALFEI. A helical membrane pass occupies residues 199–218; it reads YAIVGTILVVMIPCLLILCS. Over 219–238 the chain is Cytoplasmic; it reads YTRIAAAILKIPSAKGKHKA. The chain crosses the membrane as a helical span at residues 239-259; that stretch reads FSTCSSHLLVVSLFYISSSLT. At 260-272 the chain is on the extracellular side; that stretch reads YFWPKSNNSPESK. A helical transmembrane segment spans residues 273 to 293; sequence KLLSLSYTVVTPMLNPIIYSL. Residues 294–317 are Cytoplasmic-facing; it reads RNSEVKNALSRTFHKVLALRNCIP.

This sequence belongs to the G-protein coupled receptor 1 family. Expressed in the tongue.

Its subcellular location is the cell membrane. Its function is as follows. Odorant receptor (Potential). May be involved in taste perception. This chain is Olfactory receptor 10A5 (OR10A5), found in Homo sapiens (Human).